The sequence spans 1373 residues: MAERANLVFHNKVIDGTAIKRLISRLIDHFGMAYTSHILDQVKTLGFQQATATSISLGIDDLLTIPSKGWLVQDAEQQSLILEKHHHYGNVHAVEKLRQSIEIWYATSEYLRQEMNPNFRMTDPFNPVHMMSFSGARGNASQVHQLVGMRGLMSDPQGQMIDLPIQSNLREGLSLTEYIISCYGARKGVVDTAVRTSDAGYLTRRLVEVVQHIVVRRTDCGTIRGISVSPRNKNRMMSERIFIQTLIGRVLADDIYIGSRCVAFRNQDLGIGLVNRLITFGTQSISIRTPFTCRSTSWICRLCYGRSPTHGDLVELGEAVGIIAGQSIGEPGTQLTLRTFHTGGVFTGGTAEHVRAPYNGKIKFNEDLVHPTRTRHGHPAFLCYMDLSVIIESEDIIHSVTIPPKSFLLVQNDQYVESEQVIAEIREGTYTFHFKERVRKYIYSDSEGEMHWSTDVSHAPEFTYSNVHLLPKTSHLWVLSGNSCGSSLILFSIHKDQDQMNIPFLSVERKSISSLSVNNDQVSQKFLSSDFADKKKSGTPYYSELNGILGTSHYNFIYSAIFHENSDLLAKRRRNRFLIPFQPIQEQEKEFIPHSGISIEIPINGIFRRNSIFAFFDDPRYRRKSSGILKYGTLKADSIIQKEDMIEYRGVQKFKTKYEMKVDRFFFIPEEVHILPESSAIMVQNYSIIGVDTRITLNIRSQVGGLIRVERKKKRIELKIFSGDIHFPDKTDKISRHSGILIPPGRGKTNAKESKKLKNWIYVQRITPTKKKFFVLVRPVATYEIADSINLATLFPQDLFREKDNIQLRVFNYILYGNGKPTRGISDTSIQLVRTCLVLNWDQDNKNSSLEEVRAFFVEVSTKGLIRDFIRIGLVKSHISYIRKRNNPPDSGWISADHMNPFYSISPKADILQQSLRQNHGTIRMFLNRNKESQSLLILSSSNCFRIGPFNHVKYHNVINQSIKKKPLITIKNSPGPLGTSIPISNFYSFLPLLTYNQISVIKYLQLDNLKYIFQVINSYLIDEKGRILNLDPYSNVVLNPIKLNWYFLHQNYYHNYCAETSTIISLGQFFCENVCIAKKEPHLKSGQVLIVQRDSVVIRSAKPYLATPGAKVHGHYREILYEGDTLVTFIYEKSRSGDITQGLPKVEQVLEVRSIDSISLNLEKRIKGWNKCITRILGIPWGFLIGAELTIVQSRISLVNKIQKVYRSQGVQIHNRHIEIIVRQITSKVLVSEEGMSNVFLPGELIGLLRAERTGRALEEAICYRAVLLGITRASLNTQSFISEASFQETARVLAKAALRGRIDWLKGLKENVVLGGVIPAGTGFNKGLVHCSRQHTNILLEKKTKNLSLFEGDMRDILFYHREFCDSSISK.

Zn(2+) is bound by residues C220, C293, C300, and C303.

Belongs to the RNA polymerase beta' chain family. RpoC2 subfamily. In terms of assembly, in plastids the minimal PEP RNA polymerase catalytic core is composed of four subunits: alpha, beta, beta', and beta''. When a (nuclear-encoded) sigma factor is associated with the core the holoenzyme is formed, which can initiate transcription. Requires Zn(2+) as cofactor.

It is found in the plastid. Its subcellular location is the chloroplast. It catalyses the reaction RNA(n) + a ribonucleoside 5'-triphosphate = RNA(n+1) + diphosphate. Functionally, DNA-dependent RNA polymerase catalyzes the transcription of DNA into RNA using the four ribonucleoside triphosphates as substrates. This is DNA-directed RNA polymerase subunit beta'' from Lepidium virginicum (Virginia pepperweed).